Here is a 246-residue protein sequence, read N- to C-terminus: Probable transcriptional regulatory protein WRi_002620 (246 aa).

The segment at 1 to 22 is disordered; sequence MAGHSQFSNIKHRKGAQDAKRS.

It belongs to the TACO1 family.

The protein resides in the cytoplasm. In Wolbachia sp. subsp. Drosophila simulans (strain wRi), this protein is Probable transcriptional regulatory protein WRi_002620.